Consider the following 298-residue polypeptide: GTPase Era (298 aa).

The region spanning 3–170 is the Era-type G domain; that stretch reads KSGFVAILGR…IKLLTDNLEE (168 aa). The interval 11-18 is G1; the sequence is GRPNVGKS. 11–18 contacts GTP; it reads GRPNVGKS. The G2 stretch occupies residues 37 to 41; that stretch reads QTTRN. Residues 58–61 are G3; sequence DTPG. GTP-binding positions include 58 to 62 and 120 to 123; these read DTPGI and NKID. A G4 region spans residues 120–123; sequence NKID. Residues 149 to 151 are G5; the sequence is ISA. One can recognise a KH type-2 domain in the interval 201 to 279; it reads TQQEVPHSVA…YLETWVKVKK (79 aa).

It belongs to the TRAFAC class TrmE-Era-EngA-EngB-Septin-like GTPase superfamily. Era GTPase family. As to quaternary structure, monomer.

The protein localises to the cytoplasm. The protein resides in the cell membrane. An essential GTPase that binds both GDP and GTP, with rapid nucleotide exchange. Plays a role in 16S rRNA processing and 30S ribosomal subunit biogenesis and possibly also in cell cycle regulation and energy metabolism. In Streptococcus pyogenes serotype M4 (strain MGAS10750), this protein is GTPase Era.